Reading from the N-terminus, the 363-residue chain is Aminomethyltransferase (363 aa).

It belongs to the GcvT family. In terms of assembly, the glycine cleavage system is composed of four proteins: P, T, L and H.

It catalyses the reaction N(6)-[(R)-S(8)-aminomethyldihydrolipoyl]-L-lysyl-[protein] + (6S)-5,6,7,8-tetrahydrofolate = N(6)-[(R)-dihydrolipoyl]-L-lysyl-[protein] + (6R)-5,10-methylene-5,6,7,8-tetrahydrofolate + NH4(+). Its function is as follows. The glycine cleavage system catalyzes the degradation of glycine. The chain is Aminomethyltransferase from Dechloromonas aromatica (strain RCB).